The primary structure comprises 263 residues: Achaete-scute homolog 2 (263 aa).

Disordered stretches follow at residues 104–126 (RRRR…RNER) and 194–248 (PPSD…ELSP). Low complexity-rich tracts occupy residues 110 to 121 (ATEASSSSAAVA), 202 to 220 (PSAS…SPSP), and 230 to 247 (SPRS…GELS). One can recognise a bHLH domain in the interval 118 to 170 (AAVARRNERERNRVKLVNLGFQALRQHVPHGGANKKLSKVETLRSAVEYIRAL).

As to quaternary structure, efficient DNA binding requires dimerization with another basic helix-loop-helix (bHLH) protein. Forms heterodimers with bHLH transcription factor TCF3. May not heterodimerise with bHLH protein HAND1. As to expression, expressed in follicular T-helper (Tfh) cells.

It localises to the nucleus. Its function is as follows. Transcription factor. Binds to E-box motifs 5'-CANNTG-3' in the regulatory elements of target genes, probably as a heterodimer with another basic helix-loop-helix (bHLH) protein such as the transcription factor TCF3. May bind both open and closed chromatin, acting as a pioneer transcription factor to allow other factors to bind and activate lineage-specific genes. Required during post-implantation development for the generation of some differentiated trophoblast cell types. Transcriptional activity of ASCL2 may be antagonised in a subset of trophoblast cells by bHLH transcription factor HAND1, perhaps by competing for dimerization with other bHLH proteins. Involved in differentiation and function of follicular T-helper (Tfh) cells, thereby playing a role in germinal center responses; probably modulates expression of genes involved in Tfh cell function, such as BCL6. May also act as a suppressor of Th1-, Th2- and Th17-cell differentiation. Induces the formation of stem cells in intestinal crypts in vitro, synergistically activating transcription of target genes, such as SOX9, together with TCF4/beta-catenin. May form a bistable transcriptional switch, controlling expression of its own gene together with Wnt/R-spondin signaling, and thereby maintaining stem cell characteristics. Modulates expression of target genes, including perhaps down-regulating EGR1/Krox24 and chemokine CXCL10/Mob-1 and up-regulating CXCR4 and CDKN1C/p57kip2, in Schwann cells. May play a role in reducing proliferation of Schwann cells, perhaps acting via modulation of expression of CDKN1C. May be dispensable for blastocyst formation and later embryonic function. May be involved in the determination of neuronal precursors. The sequence is that of Achaete-scute homolog 2 (Ascl2) from Mus musculus (Mouse).